We begin with the raw amino-acid sequence, 878 residues long: NUT family member 2A (878 aa).

4 disordered regions span residues 273–324, 417–566, 627–757, and 775–878; these read WSQG…DDSC, QKSQ…LSYT, KEKQ…EEEE, and WLPQ…RCSQ. 2 stretches are compositionally biased toward pro residues: residues 278–288 and 427–444; these read PLPPPPPPAAQ and CLPPPATPRLEPRGPPAP. Residues 476–487 are compositionally biased toward basic residues; sequence TKARRPPPRPHR. A compositionally biased stretch (basic and acidic residues) spans 537 to 551; sequence EPEKQREEGEVKQPQ.

It belongs to the NUT family.

In Homo sapiens (Human), this protein is NUT family member 2A (NUTM2A).